Here is a 427-residue protein sequence, read N- to C-terminus: Adenylosuccinate synthetase (427 aa).

GTP-binding positions include 12–18 (GDEGKGK) and 40–42 (GHT). The active-site Proton acceptor is the aspartate 13. The Mg(2+) site is built by aspartate 13 and glycine 40. IMP-binding positions include 13–16 (DEGK), 38–41 (NAGH), threonine 127, arginine 141, glutamine 222, threonine 237, and arginine 301. The Proton donor role is filled by histidine 41. Residue 297–303 (VVTKRPR) coordinates substrate. Residues arginine 303, 329-331 (SLD), and 411-413 (AVG) each bind GTP.

The protein belongs to the adenylosuccinate synthetase family. As to quaternary structure, homodimer. It depends on Mg(2+) as a cofactor.

Its subcellular location is the cytoplasm. The enzyme catalyses IMP + L-aspartate + GTP = N(6)-(1,2-dicarboxyethyl)-AMP + GDP + phosphate + 2 H(+). It participates in purine metabolism; AMP biosynthesis via de novo pathway; AMP from IMP: step 1/2. In terms of biological role, plays an important role in the de novo pathway of purine nucleotide biosynthesis. Catalyzes the first committed step in the biosynthesis of AMP from IMP. The protein is Adenylosuccinate synthetase of Leuconostoc citreum (strain KM20).